The sequence spans 306 residues: Homoserine O-acetyltransferase (306 aa).

Cysteine 142 acts as the Acyl-thioester intermediate in catalysis. Substrate is bound by residues lysine 163 and serine 192. Histidine 235 serves as the catalytic Proton acceptor. Glutamate 237 is a catalytic residue. Arginine 249 contacts substrate.

The protein belongs to the MetA family.

The protein localises to the cytoplasm. It carries out the reaction L-homoserine + acetyl-CoA = O-acetyl-L-homoserine + CoA. Its pathway is amino-acid biosynthesis; L-methionine biosynthesis via de novo pathway; O-acetyl-L-homoserine from L-homoserine: step 1/1. Transfers an acetyl group from acetyl-CoA to L-homoserine, forming acetyl-L-homoserine. This is Homoserine O-acetyltransferase from Clostridium botulinum (strain Alaska E43 / Type E3).